The primary structure comprises 113 residues: Carrot ABA-induced in somatic embryos 3 (113 aa).

3 stretches are compositionally biased toward basic and acidic residues: residues 1-17, 32-52, and 65-77; these read MASG…RAKQ, EAQE…KEQL, and GETR…KEGY. Residues 1–113 are disordered; it reads MASGQEKRSE…IDQSKFRTKS (113 aa).

It belongs to the small hydrophilic plant seed protein family. Expressed in embryogenic cells, somatic embryos and seeds at the later stages of development. Not detected in leaves.

This chain is Carrot ABA-induced in somatic embryos 3, found in Daucus carota (Wild carrot).